We begin with the raw amino-acid sequence, 622 residues long: Iron transport multicopper oxidase fio1 (622 aa).

Positions 1–22 are cleaved as a signal peptide; it reads MNKFFSFPILGLLLTCVRFVVA. Over 23 to 553 the chain is Extracellular; that stretch reads KERLFEWNVT…GEMPAGWTSK (531 aa). N-linked (GlcNAc...) asparagine glycosylation is found at Asn30 and Asn79. 2 consecutive Plastocyanin-like domains span residues 49–147 and 194–304; these read IGVN…FIIN and TGLF…LSYN. Residues His85 and His87 each coordinate Cu cation. N-linked (GlcNAc...) asparagine glycosylation is found at Asn117 and Asn123. Cu cation contacts are provided by His129 and His131. N-linked (GlcNAc...) asparagine glycans are attached at residues Asn198, Asn202, Asn234, Asn269, Asn296, Asn338, Asn360, and Asn376. The region spanning 386 to 498 is the Plastocyanin-like 3 domain; the sequence is EPVTYGPYTN…SGLLATFIEA (113 aa). Residues His417, His420, His422, His480, Cys481, His482, and His486 each contribute to the Cu cation site. Asn532 carries an N-linked (GlcNAc...) asparagine glycan. Residues 554–574 traverse the membrane as a helical segment; that stretch reads AIGTMAACVISACIGMGSIIF. Residues 575 to 622 are Cytoplasmic-facing; it reads YGASIHPVPTEELDENDDLQEAALENAAMFLDTDKAVEKVVEGKDEIK.

This sequence belongs to the multicopper oxidase family. Cu cation serves as cofactor.

It is found in the cell membrane. In terms of biological role, could be an iron transport multicopper oxidase, which is required for Fe(2+) high affinity uptake. May be required to oxidize Fe(2+) and release it from the transporter. Essential component of copper-dependent iron transport. The polypeptide is Iron transport multicopper oxidase fio1 (fio1) (Schizosaccharomyces pombe (strain 972 / ATCC 24843) (Fission yeast)).